The sequence spans 581 residues: MKASRFFVSTLKEAPADAEVASHRLMMRAGMIKKLGTGIYTYMPMGLRVIRKVEAIVREEMNRAGAVELTMPVVQPAEFWQETGRFDKMGPELLRIKDRHDRDFVVQPTSEEVVTDIARQEIRSYKQLPKNFYQIQTKFRDERRPRFGLMRGREFIMKDAYSFDRDLDAAKASYQAMADAYRRIFDRFGLRYRAVAADSGAIGGDLSEEFQVIAATGEDAIVYCPGSDYAANMEKAEALAPAGPRPAAAKALEKTPTPGKSTCADVAELLGVPLSTTVKSLVLATDILDEAGNPKGSQVWLLLLRGDHDMNEIKVGKVPGLDKGFRFATLAEIDDHFGCKPGYLGPLNLKKPVRLVADREVMVMADWITGANEVDFHMTGVNWGRDLPEPELVADLRNVVAGDASPDGKGVLAIERGIEVGHVFVLGTKYSKDMNATYLDEAGKPQFLEMGCYGIGITRLPAAAIEQNHDERGIIWPDALAPFTVVVCPIGMDRSPEVKVAAEALYEQLLAAGVDVLLDDRGERPGAMFADWELIGVPHRVVISDRGLKEGQLEYQHRRDTAATKVPAAGIAEFIAGKFAQ.

The protein belongs to the class-II aminoacyl-tRNA synthetase family. ProS type 1 subfamily. As to quaternary structure, homodimer.

It is found in the cytoplasm. It catalyses the reaction tRNA(Pro) + L-proline + ATP = L-prolyl-tRNA(Pro) + AMP + diphosphate. In terms of biological role, catalyzes the attachment of proline to tRNA(Pro) in a two-step reaction: proline is first activated by ATP to form Pro-AMP and then transferred to the acceptor end of tRNA(Pro). As ProRS can inadvertently accommodate and process non-cognate amino acids such as alanine and cysteine, to avoid such errors it has two additional distinct editing activities against alanine. One activity is designated as 'pretransfer' editing and involves the tRNA(Pro)-independent hydrolysis of activated Ala-AMP. The other activity is designated 'posttransfer' editing and involves deacylation of mischarged Ala-tRNA(Pro). The misacylated Cys-tRNA(Pro) is not edited by ProRS. In Variovorax paradoxus (strain S110), this protein is Proline--tRNA ligase.